The following is a 43-amino-acid chain: Bacteriocin weissellin-A (43 aa).

An intrachain disulfide couples C9 to C14.

It is found in the secreted. Functionally, highly active against Gram-positive bacteria M.flavus strain ATCC 400, M.luteus strain CECT241, C.soprogenes strain NCTC533, L.monocytogenes strain ATCC 19111, L.inocua strain ATCC BAA-680D and S.carnosus strain LMG13564. Less active against B.cereus strain LMG13569, C.thiaminolyticum strain ATCC 15579, E.faecalis strain NCTC8176, L.lactis strain LM0230, L.casei strain ATCC 344, L.lactis strain IL1403, L.jensenii strain ATCC 25258, L.plantarum strain CECT220, L.brevis strain ATCC 8287, L.bulgaricus strain LMG13551, P.acidilactici strain ATCC 25740, P.pentosaceus strain ATCC 33316 and P.pentosaceus strain LMG13560. Weakly active against L.mesenteroides strain ATCC 19254, L.lactis strain ATCC 1454, L.sakei strain CECT906T, L.lactis subsp. cremoris strain MC1363 and L.curvatus strain ATCC 51436. Not active against Gram-negative bacterium S.enteritidis strain ATCC 13076. The mode of action appears to be non-lytic. Inactivated by proteinase K, but insensitive to trypsin, alpha-chymotrypsin, pepsin and papain. This chain is Bacteriocin weissellin-A, found in Weissella paramesenteroides (Leuconostoc paramesenteroides).